Consider the following 199-residue polypeptide: Translation initiation factor IF-3 (199 aa).

Belongs to the IF-3 family. As to quaternary structure, monomer.

Its subcellular location is the cytoplasm. Its function is as follows. IF-3 binds to the 30S ribosomal subunit and shifts the equilibrium between 70S ribosomes and their 50S and 30S subunits in favor of the free subunits, thus enhancing the availability of 30S subunits on which protein synthesis initiation begins. This chain is Translation initiation factor IF-3, found in Gloeobacter violaceus (strain ATCC 29082 / PCC 7421).